Reading from the N-terminus, the 75-residue chain is Translation initiation factor IF-1 (75 aa).

The 72-residue stretch at 1 to 72 folds into the S1-like domain; the sequence is MSKQDLIEME…TKGRITYRLK (72 aa).

It belongs to the IF-1 family. In terms of assembly, component of the 30S ribosomal translation pre-initiation complex which assembles on the 30S ribosome in the order IF-2 and IF-3, IF-1 and N-formylmethionyl-tRNA(fMet); mRNA recruitment can occur at any time during PIC assembly.

It is found in the cytoplasm. Functionally, one of the essential components for the initiation of protein synthesis. Stabilizes the binding of IF-2 and IF-3 on the 30S subunit to which N-formylmethionyl-tRNA(fMet) subsequently binds. Helps modulate mRNA selection, yielding the 30S pre-initiation complex (PIC). Upon addition of the 50S ribosomal subunit IF-1, IF-2 and IF-3 are released leaving the mature 70S translation initiation complex. The sequence is that of Translation initiation factor IF-1 from Synechocystis sp. (strain ATCC 27184 / PCC 6803 / Kazusa).